A 335-amino-acid chain; its full sequence is Putative zinc metalloprotease CPE1693 (335 aa).

H17 contributes to the Zn(2+) binding site. The active site involves E18. H21 is a binding site for Zn(2+). 3 helical membrane passes run 88–110, 262–284, and 312–334; these read ILVM…IGLA, LLWF…FPAL, and TVGF…IFPI. A PDZ domain is found at 96–174; it reads FMNYVLALII…PVELEIKRGN (79 aa).

It belongs to the peptidase M50B family. It depends on Zn(2+) as a cofactor.

It localises to the cell membrane. The polypeptide is Putative zinc metalloprotease CPE1693 (Clostridium perfringens (strain 13 / Type A)).